The chain runs to 743 residues: Ectonucleotide pyrophosphatase/phosphodiesterase C27A7.3 (743 aa).

At M1–K23 the chain is on the cytoplasmic side. Residues I24–V44 traverse the membrane as a helical; Signal-anchor for type II membrane protein segment. Topologically, residues A45–W743 are lumenal. Zn(2+) contacts are provided by D87 and T123. Residue T123 is the Nucleophile of the active site. N-linked (GlcNAc...) asparagine glycosylation is present at N195. Zn(2+)-binding residues include D243, H247, D286, and H287. N-linked (GlcNAc...) asparagine glycosylation is found at N293 and N320. Zn(2+) is bound at residue H383. 3 N-linked (GlcNAc...) asparagine glycosylation sites follow: N406, N434, and N536. The Ca(2+) site is built by D635, N637, D639, I641, and D643. N737 carries an N-linked (GlcNAc...) asparagine glycan.

It belongs to the nucleotide pyrophosphatase/phosphodiesterase family. Requires Zn(2+) as cofactor. Ca(2+) is required as a cofactor.

The protein resides in the membrane. In terms of biological role, probable phosphodiesterase. The protein is Ectonucleotide pyrophosphatase/phosphodiesterase C27A7.3 of Caenorhabditis elegans.